A 1303-amino-acid polypeptide reads, in one-letter code: Phosphoribosylformylglycinamidine synthase (1303 aa).

ATP contacts are provided by residues 308–319 and Ala-679; that span reads GASTGSGGEIRD. Mg(2+) is bound by residues Glu-719, Asn-723, and Asp-892. The segment at 1003–1023 is disordered; the sequence is LRDNPACADQEHEAKKDNSDP. Positions 1011-1021 are enriched in basic and acidic residues; the sequence is DQEHEAKKDNS. A Glutamine amidotransferase type-1 domain is found at 1050–1303; it reads MAILREQGVN…MFQNARKNIG (254 aa). Cys-1143 (nucleophile) is an active-site residue. Active-site residues include His-1268 and Glu-1270.

The protein in the N-terminal section; belongs to the FGAMS family. In terms of assembly, monomer.

Its subcellular location is the cytoplasm. It catalyses the reaction N(2)-formyl-N(1)-(5-phospho-beta-D-ribosyl)glycinamide + L-glutamine + ATP + H2O = 2-formamido-N(1)-(5-O-phospho-beta-D-ribosyl)acetamidine + L-glutamate + ADP + phosphate + H(+). The protein operates within purine metabolism; IMP biosynthesis via de novo pathway; 5-amino-1-(5-phospho-D-ribosyl)imidazole from N(2)-formyl-N(1)-(5-phospho-D-ribosyl)glycinamide: step 1/2. Functionally, phosphoribosylformylglycinamidine synthase involved in the purines biosynthetic pathway. Catalyzes the ATP-dependent conversion of formylglycinamide ribonucleotide (FGAR) and glutamine to yield formylglycinamidine ribonucleotide (FGAM) and glutamate. This is Phosphoribosylformylglycinamidine synthase from Aliivibrio fischeri (strain ATCC 700601 / ES114) (Vibrio fischeri).